The chain runs to 774 residues: Polymerase basic protein 2 (774 aa).

It belongs to the influenza viruses PB2 family. In terms of assembly, influenza RNA polymerase is composed of three subunits: PB1, PB2 and PA. Interacts (via N-terminus) with PB1 (via C-terminus). Interacts with nucleoprotein NP (via N-terminus).

The protein resides in the virion. The protein localises to the host nucleus. Plays an essential role in transcription initiation and cap-stealing mechanism, in which cellular capped pre-mRNAs are used to generate primers for viral transcription. Recognizes and binds a wide range of cap structures of target pre-RNAs which are subsequently cleaved after 10-13 nucleotides by the viral protein PA. Plays a role in the initiation of the viral genome replication and modulates the activity of the ribonucleoprotein (RNP) complex. The polypeptide is Polymerase basic protein 2 (Homo sapiens (Human)).